The following is a 217-amino-acid chain: Probable transaldolase (217 aa).

Catalysis depends on K85, which acts as the Schiff-base intermediate with substrate.

This sequence belongs to the transaldolase family. Type 3B subfamily.

Its subcellular location is the cytoplasm. The enzyme catalyses D-sedoheptulose 7-phosphate + D-glyceraldehyde 3-phosphate = D-erythrose 4-phosphate + beta-D-fructose 6-phosphate. It participates in carbohydrate degradation; pentose phosphate pathway; D-glyceraldehyde 3-phosphate and beta-D-fructose 6-phosphate from D-ribose 5-phosphate and D-xylulose 5-phosphate (non-oxidative stage): step 2/3. Functionally, transaldolase is important for the balance of metabolites in the pentose-phosphate pathway. This is Probable transaldolase from Brachyspira hyodysenteriae (strain ATCC 49526 / WA1).